Here is a 68-residue protein sequence, read N- to C-terminus: Kasstasin (68 aa).

An N-terminal signal peptide occupies residues 1–20 (MMKKSMLLLFFLGMVSFSLA). Residues 21-44 (DDKREDEGEEKRADEGEEKRAAEE) constitute a propeptide that is removed on maturation. Residues 22–41 (DKREDEGEEKRADEGEEKRA) form a disordered region. A Lysine amide modification is found at Lys67.

It belongs to the frog skin active peptide (FSAP) family. Brevinin subfamily. As to expression, expressed by the skin dorsal glands.

The protein localises to the secreted. Peptide with potent vasoconstrictor properties (EC50=25 pM). Has moderate antimicrobial activity against Gram-positive bacterium S.aureus (MIC=55 uM) and against Gram-negative bacterium E.coli (MIC=110 uM). Not active against fungus C.albicans. Has weak hemolytic activity against horse erythrocytes. The sequence is that of Kasstasin from Phlyctimantis maculatus (Red-legged running frog).